The following is a 401-amino-acid chain: Nuclear hormone receptor family member nhr-65 (401 aa).

Positions Pro10 to Phe79 form a DNA-binding region, nuclear receptor. 2 consecutive NR C4-type zinc fingers follow at residues Cys13 to Cys33 and Cys49 to Cys67. One can recognise an NR LBD domain in the interval Lys132–Ala398.

The protein belongs to the nuclear hormone receptor family.

It localises to the nucleus. Functionally, orphan nuclear receptor. The protein is Nuclear hormone receptor family member nhr-65 (nhr-65) of Caenorhabditis elegans.